A 312-amino-acid polypeptide reads, in one-letter code: MKVTVVGAGNVGATCADVLAYREIVNEVILLDIKEGVAEGKALDIWQKAPITQYDTKTTGVTNDYSKTANSDVVVITSGLPRKPGMTRDDLISTNAGIVRAVTESVVKYSPNAIIIVVSNPLDVMTYCAHITSKLPRNKVIGMAGVLDTARYRAFLADEIGCSPKEIQGMLLGGHGDTMVPLPRYTTVGGIPVTELVEADKLNAIIERTKNGGGELVKLMGTSAWYAPGAAAAQMVEAIVKDQKKIIPVCIKLEGEYGIDDCYLGVPAVIGKNGIEKVIELKLNAEEKALMETSRKHVKEVMNVLDGLPQQA.

Residues 7–12 and D32 each bind NAD(+); that span reads GAGNVG. 2 residues coordinate substrate: R82 and R88. NAD(+) contacts are provided by residues N95 and 118 to 120; that span reads VSN. Substrate-binding residues include N120 and R151. The Proton acceptor role is filled by H175.

This sequence belongs to the LDH/MDH superfamily. MDH type 3 family.

The enzyme catalyses (S)-malate + NAD(+) = oxaloacetate + NADH + H(+). Functionally, catalyzes the reversible oxidation of malate to oxaloacetate. In Cytophaga hutchinsonii (strain ATCC 33406 / DSM 1761 / CIP 103989 / NBRC 15051 / NCIMB 9469 / D465), this protein is Malate dehydrogenase.